A 226-amino-acid chain; its full sequence is UPF0173 metal-dependent hydrolase GWCH70_2696 (226 aa).

It belongs to the UPF0173 family.

The chain is UPF0173 metal-dependent hydrolase GWCH70_2696 from Geobacillus sp. (strain WCH70).